The chain runs to 245 residues: 23S rRNA (guanosine-2'-O-)-methyltransferase RlmB (245 aa).

S-adenosyl-L-methionine-binding residues include Gly-197, Ile-217, and Leu-226.

This sequence belongs to the class IV-like SAM-binding methyltransferase superfamily. RNA methyltransferase TrmH family. RlmB subfamily.

The protein resides in the cytoplasm. The catalysed reaction is guanosine(2251) in 23S rRNA + S-adenosyl-L-methionine = 2'-O-methylguanosine(2251) in 23S rRNA + S-adenosyl-L-homocysteine + H(+). In terms of biological role, specifically methylates the ribose of guanosine 2251 in 23S rRNA. This chain is 23S rRNA (guanosine-2'-O-)-methyltransferase RlmB, found in Pasteurella multocida (strain Pm70).